The following is a 164-amino-acid chain: Probable Brix domain-containing ribosomal biogenesis protein (164 aa).

One can recognise a Brix domain in the interval 1–164 (MIITTSRKPS…IKTVKILDIE (164 aa)).

Its function is as follows. Probably involved in the biogenesis of the ribosome. The polypeptide is Probable Brix domain-containing ribosomal biogenesis protein (Methanococcus maripaludis (strain DSM 14266 / JCM 13030 / NBRC 101832 / S2 / LL)).